Consider the following 419-residue polypeptide: G protein-activated inward rectifier potassium channel 4 (419 aa).

At methionine 1–tryptophan 86 the chain is on the cytoplasmic side. Serine 5 bears the Phosphoserine mark. A helical membrane pass occupies residues arginine 87–isoleucine 111. Over alanine 112 to glycine 135 the chain is Extracellular. The segment at residues phenylalanine 136–glutamate 147 is an intramembrane region (helical; Pore-forming). The segment at residues threonine 148–phenylalanine 154 is an intramembrane region (pore-forming). A Selectivity filter motif is present at residues threonine 149–phenylalanine 154. The Extracellular segment spans residues arginine 155–glutamate 163. The helical transmembrane segment at glycine 164–cysteine 185 threads the bilayer. At methionine 186–methionine 419 the chain is on the cytoplasmic side. Low complexity predominate over residues leucine 380 to alanine 390. A disordered region spans residues leucine 380 to methionine 419. A compositionally biased stretch (polar residues) spans leucine 409–methionine 419.

This sequence belongs to the inward rectifier-type potassium channel (TC 1.A.2.1) family. KCNJ5 subfamily. Associates with KCNJ3/GIRK1 or KCNJ6/GRIK2 to form a G-protein-activated heteromultimer pore-forming unit. The resulting inward current is much larger. In terms of tissue distribution, most abundant in heart tissue where it is found predominantly in atria. Also found in brain, kidney, liver, spleen, lung and thymus.

The protein resides in the membrane. It catalyses the reaction K(+)(in) = K(+)(out). With respect to regulation, heteromultimer composed of KCNJ3/GIRK1 and KCNJ5/GIRK4 is activated by phosphatidylinositol 4,5 biphosphate (PtdIns(4,5)P2). Functionally, inward rectifier potassium channels are characterized by a greater tendency to allow potassium to flow into the cell rather than out of it. Their voltage dependence is regulated by the concentration of extracellular potassium; as external potassium is raised, the voltage range of the channel opening shifts to more positive voltages. The inward rectification is mainly due to the blockage of outward current by internal magnesium. Can be blocked by external barium. This potassium channel is controlled by G proteins. This Rattus norvegicus (Rat) protein is G protein-activated inward rectifier potassium channel 4 (Kcnj5).